Here is a 247-residue protein sequence, read N- to C-terminus: Protein Thf1 (247 aa).

Residues 198 to 224 (IAQVRQAMDDILEAQKKRREADQAKKE) are a coiled coil. Positions 209–247 (LEAQKKRREADQAKKEGSDDTPTTEASTPDSEPTSEVSS) are disordered. Residues 210-226 (EAQKKRREADQAKKEGS) show a composition bias toward basic and acidic residues. Residues 228-247 (DTPTTEASTPDSEPTSEVSS) are compositionally biased toward polar residues.

It belongs to the THF1 family.

Its function is as follows. May be involved in photosynthetic membrane biogenesis. In Acaryochloris marina (strain MBIC 11017), this protein is Protein Thf1.